Here is a 1023-residue protein sequence, read N- to C-terminus: Cell division cycle-associated protein 2 (1023 aa).

Residues 1-14 show a composition bias toward basic and acidic residues; that stretch reads MDANSKDKPPETKE. Residues 1–21 form a disordered region; sequence MDANSKDKPPETKESAMNNAG. Phosphoserine is present on residues S98, S120, S126, S131, S210, S291, and S309. At T312 the chain carries Phosphothreonine. In terms of domain architecture, PP1-binding spans 389 to 449; sequence KRKRVTFGED…PEPLPQPDFD (61 aa). Phosphoserine occurs at positions 400 and 407. The residue at position 412 (T412) is a Phosphothreonine. The residue at position 437 (S437) is a Phosphoserine. Residues 542–580 form a disordered region; the sequence is SQETKCTKRALPKKSQVLKSCRKKKGKGKKSVQKSLYGE. Residues 561-573 show a composition bias toward basic residues; that stretch reads SCRKKKGKGKKSV. Phosphoserine occurs at positions 591 and 614. Residues 667-729 form a disordered region; that stretch reads SSLGNATSDE…ERVASDSPKP (63 aa). Residues 679–691 are compositionally biased toward low complexity; that stretch reads NTNIMNINENKNI. The segment covering 696–706 has biased composition (basic and acidic residues); it reads NKSESENEPKA. Phosphoserine is present on residues S710 and S756. A Glycyl lysine isopeptide (Lys-Gly) (interchain with G-Cter in SUMO2) cross-link involves residue K762. The span at 803-816 shows a compositional bias: basic and acidic residues; sequence ESKSQSEDLGRKPM. Disordered stretches follow at residues 803-860 and 936-1023; these read ESKS…GSSV and SPIK…ERKQ. 2 positions are modified to phosphoserine: S936 and S977. Polar residues-rich tracts occupy residues 979-992 and 1000-1010; these read CISTLANTKATSQF and SLNGKGESSLT. S1000 is subject to Phosphoserine. Basic and acidic residues predominate over residues 1013-1023; the sequence is ERIEHNGERKQ.

In terms of assembly, interacts with PPP1CC. In terms of processing, phosphorylated by CDK1. May regulate its subcellular location. As to expression, ubiquitously expressed.

The protein resides in the nucleus. In terms of biological role, regulator of chromosome structure during mitosis required for condensin-depleted chromosomes to retain their compact architecture through anaphase. Acts by mediating the recruitment of phopsphatase PP1-gamma subunit (PPP1CC) to chromatin at anaphase and into the following interphase. At anaphase onset, its association with chromatin targets a pool of PPP1CC to dephosphorylate substrates. This chain is Cell division cycle-associated protein 2 (CDCA2), found in Homo sapiens (Human).